A 762-amino-acid polypeptide reads, in one-letter code: Subtilisin-like protease SBT3.11 (762 aa).

The signal sequence occupies residues 1–16 (MMSSIVSWWFFWVISA). Residues 17-116 (VCILKVEFNI…VTPNTFYELQ (100 aa)) constitute a propeptide, activation peptide. Residues 37–115 (VHIVYLGEKE…QVTPNTFYEL (79 aa)) enclose the Inhibitor I9 domain. A Peptidase S8 domain is found at 120–609 (TFDYLGLSHS…GGLVNPNKAA (490 aa)). Catalysis depends on Asp150, which acts as the Charge relay system. Asn206 carries N-linked (GlcNAc...) asparagine glycosylation. The Charge relay system role is filled by His226. Asn241 and Asn371 each carry an N-linked (GlcNAc...) asparagine glycan. Residue Ser540 is the Charge relay system of the active site.

Belongs to the peptidase S8 family.

The protein resides in the secreted. This is Subtilisin-like protease SBT3.11 from Arabidopsis thaliana (Mouse-ear cress).